The chain runs to 167 residues: MNMTHHKSGLRWLWLAVLAFVLDQASKLAVVKLLPFGYPGVEITPFFNLVHVYNKGAAFSFLADQGGWQRWFFAVLAFAICGLLIHWLRKQSVAQRWSGIAYSLIIGGALGNVFDRLVLGHVVDFLDFYWQRAHWPAFNLADSFIFIGAAMIVLDGFRSEKKKDVTP.

Transmembrane regions (helical) follow at residues 12 to 32, 68 to 88, and 99 to 119; these read WLWL…AVVK, WQRW…IHWL, and GIAY…RLVL. Active-site residues include Asp-124 and Asp-142. The helical transmembrane segment at 137–157 threads the bilayer; the sequence is AFNLADSFIFIGAAMIVLDGF.

The protein belongs to the peptidase A8 family.

It localises to the cell inner membrane. It catalyses the reaction Release of signal peptides from bacterial membrane prolipoproteins. Hydrolyzes -Xaa-Yaa-Zaa-|-(S,diacylglyceryl)Cys-, in which Xaa is hydrophobic (preferably Leu), and Yaa (Ala or Ser) and Zaa (Gly or Ala) have small, neutral side chains.. It participates in protein modification; lipoprotein biosynthesis (signal peptide cleavage). Functionally, this protein specifically catalyzes the removal of signal peptides from prolipoproteins. The protein is Lipoprotein signal peptidase of Aeromonas hydrophila subsp. hydrophila (strain ATCC 7966 / DSM 30187 / BCRC 13018 / CCUG 14551 / JCM 1027 / KCTC 2358 / NCIMB 9240 / NCTC 8049).